The primary structure comprises 228 residues: LexA repressor (228 aa).

Positions 26–46 form a DNA-binding region, H-T-H motif; that stretch reads FDEMKDALDLRSKSGIHRLIT. Active-site for autocatalytic cleavage activity residues include Ser-149 and Lys-187.

The protein belongs to the peptidase S24 family. As to quaternary structure, homodimer.

The enzyme catalyses Hydrolysis of Ala-|-Gly bond in repressor LexA.. Functionally, represses a number of genes involved in the response to DNA damage (SOS response), including recA and lexA. In the presence of single-stranded DNA, RecA interacts with LexA causing an autocatalytic cleavage which disrupts the DNA-binding part of LexA, leading to derepression of the SOS regulon and eventually DNA repair. This is LexA repressor from Cereibacter sphaeroides (strain ATCC 17025 / ATH 2.4.3) (Rhodobacter sphaeroides).